A 562-amino-acid chain; its full sequence is Tissue-type plasminogen activator (562 aa).

A signal peptide spans 1–20 (MNAMKRGLCCVLLLCGAVFA). A propeptide spanning residues 21–32 (LPSQEIHARVRR) is cleaved from the precursor. A propeptide spans 33-35 (GAR) (removed by plasmin). One can recognise a Fibronectin type-I domain in the interval 39-81 (VICRDEKTQMIYQQHQSWLRPVLRSNRVEYCWCNSGRAQCHSV). 17 disulfide bridges follow: Cys-41–Cys-71, Cys-69–Cys-78, Cys-86–Cys-97, Cys-91–Cys-108, Cys-110–Cys-119, Cys-127–Cys-208, Cys-148–Cys-190, Cys-179–Cys-203, Cys-215–Cys-296, Cys-236–Cys-278, Cys-267–Cys-291, Cys-299–Cys-430, Cys-342–Cys-358, Cys-350–Cys-419, Cys-444–Cys-519, Cys-476–Cys-492, and Cys-509–Cys-537. Residues 42–52 (RDEKTQMIYQQ) form an important for binding to annexin A2 region. The 39-residue stretch at 82–120 (PVRSCSEPRCFNGGTCQQALYFSDFVCQCPEGFAGKCCE) folds into the EGF-like domain. O-linked (Fuc) threonine glycosylation occurs at Thr-96. Kringle domains lie at 126–208 (TCYE…TPAC) and 214–296 (DCYF…VPSC). Asn-152 carries an N-linked (GlcNAc...) asparagine glycan. In terms of domain architecture, Peptidase S1 spans 311–561 (IKGGLFADIA…YLDWIHDNMR (251 aa)). Residues His-357 and Asp-406 each act as charge relay system in the active site. A glycan (N-linked (GlcNAc...) asparagine) is linked at Asn-483. Residue Ser-513 is the Charge relay system of the active site.

The protein belongs to the peptidase S1 family. In terms of assembly, heterodimer of chain A and chain B held by a disulfide bond. Binds to fibrin with high affinity. This interaction leads to an increase in the catalytic efficiency of the enzyme due to an increase in affinity for plasminogen. Similarly, binding to heparin increases the activation of plasminogen. Binds to annexin A2, cytokeratin-8, fibronectin and laminin. Binds to mannose receptor and the low-density lipoprotein receptor-related protein (LRP1); these proteins are involved in TPA clearance. Binds LRP1B; binding is followed by internalization and degradation. Forms heterodimer with SERPINA5. Interacts with SERPINE1. In complex with SERPINE1, interacts with SORL1. The single chain, almost fully active enzyme, can be further processed into a two-chain fully active form by a cleavage after Arg-310 catalyzed by plasmin, tissue kallikrein or factor Xa.

Its subcellular location is the secreted. It localises to the extracellular space. It catalyses the reaction Specific cleavage of Arg-|-Val bond in plasminogen to form plasmin.. Inhibited by SERPINA5. Inhibited by SERPINE1. Functionally, converts the abundant, but inactive, zymogen plasminogen to plasmin by hydrolyzing a single Arg-Val bond in plasminogen. By controlling plasmin-mediated proteolysis, it plays an important role in tissue remodeling and degradation, in cell migration and many other physiopathological events. During oocyte activation, plays a role in cortical granule reaction in the zona reaction, which contributes to the block to polyspermy. This Pongo abelii (Sumatran orangutan) protein is Tissue-type plasminogen activator (PLAT).